The chain runs to 227 residues: PKHD-type hydroxylase CC_0027 (227 aa).

The Fe2OG dioxygenase domain maps to 78–178 (TILSPMFNRY…RTASFFWIQS (101 aa)). Fe cation is bound by residues His96, Asp98, and His159. Arg169 contributes to the 2-oxoglutarate binding site.

Requires Fe(2+) as cofactor. L-ascorbate serves as cofactor.

The chain is PKHD-type hydroxylase CC_0027 from Caulobacter vibrioides (strain ATCC 19089 / CIP 103742 / CB 15) (Caulobacter crescentus).